Reading from the N-terminus, the 445-residue chain is 2-oxoisovalerate dehydrogenase subunit alpha, mitochondrial (445 aa).

The N-terminal 45 residues, 1–45 (MAVAIAAARVWRLNRGLSQAALLLLRRPGARGLARSHPRRQQQQF), are a transit peptide targeting the mitochondrion. Residues 33 to 54 (LARSHPRRQQQQFSSLDDKPQF) form a disordered region. Thiamine diphosphate-binding residues include Y158 and R159. Position 206 (S206) interacts with K(+). Position 207 (S207) interacts with thiamine diphosphate. P208, T211, and Q212 together coordinate K(+). Residue E238 participates in Mg(2+) binding. Thiamine diphosphate contacts are provided by G239, A240, and R265. Residues N267 and Y269 each coordinate Mg(2+). H336 is a thiamine diphosphate binding site. S337 bears the Phosphoserine; by BCKDK mark. Position 338 is a phosphothreonine (T338). 2 positions are modified to phosphoserine: S339 and S347. An N6-acetyllysine; alternate modification is found at K356. An N6-succinyllysine; alternate modification is found at K356. Position 380 is an N6-succinyllysine (K380).

The protein belongs to the BCKDHA family. Heterotetramer of 2 alpha/BCKDHA and 2 beta chains/BCKDHB that forms the branched-chain alpha-keto acid decarboxylase (E1) component of the BCKD complex. The branched-chain alpha-ketoacid dehydrogenase is a large complex composed of three major building blocks E1, E2 and E3. It is organized around E2, a 24-meric cubic core composed of DBT, to which are associated 6 to 12 copies of E1, and approximately 6 copies of the dehydrogenase E3, a DLD dimer. Interacts with PPM1K. Requires thiamine diphosphate as cofactor. Mg(2+) serves as cofactor. In terms of processing, phosphorylated at Ser-337 by BCKDK and dephosphorylated by protein phosphatase PPM1K.

The protein resides in the mitochondrion matrix. The enzyme catalyses N(6)-[(R)-lipoyl]-L-lysyl-[protein] + 3-methyl-2-oxobutanoate + H(+) = N(6)-[(R)-S(8)-2-methylpropanoyldihydrolipoyl]-L-lysyl-[protein] + CO2. Functionally, together with BCKDHB forms the heterotetrameric E1 subunit of the mitochondrial branched-chain alpha-ketoacid dehydrogenase (BCKD) complex. The BCKD complex catalyzes the multi-step oxidative decarboxylation of alpha-ketoacids derived from the branched-chain amino-acids valine, leucine and isoleucine producing CO2 and acyl-CoA which is subsequently utilized to produce energy. The E1 subunit catalyzes the first step with the decarboxylation of the alpha-ketoacid forming an enzyme-product intermediate. A reductive acylation mediated by the lipoylamide cofactor of E2 extracts the acyl group from the E1 active site for the next step of the reaction. The polypeptide is 2-oxoisovalerate dehydrogenase subunit alpha, mitochondrial (BCKDHA) (Pan troglodytes (Chimpanzee)).